The following is a 185-amino-acid chain: Segregation and condensation protein B (185 aa).

It belongs to the ScpB family. In terms of assembly, homodimer. Homodimerization may be required to stabilize the binding of ScpA to the Smc head domains. Component of a cohesin-like complex composed of ScpA, ScpB and the Smc homodimer, in which ScpA and ScpB bind to the head domain of Smc. The presence of the three proteins is required for the association of the complex with DNA.

The protein resides in the cytoplasm. In terms of biological role, participates in chromosomal partition during cell division. May act via the formation of a condensin-like complex containing Smc and ScpA that pull DNA away from mid-cell into both cell halves. The chain is Segregation and condensation protein B from Carboxydothermus hydrogenoformans (strain ATCC BAA-161 / DSM 6008 / Z-2901).